Reading from the N-terminus, the 236-residue chain is Glucosamine-6-phosphate deaminase (236 aa).

Catalysis depends on aspartate 67, which acts as the Proton acceptor; for enolization step. Asparagine 136 serves as the catalytic For ring-opening step. Histidine 138 functions as the Proton acceptor; for ring-opening step in the catalytic mechanism. Catalysis depends on glutamate 143, which acts as the For ring-opening step.

It belongs to the glucosamine/galactosamine-6-phosphate isomerase family. NagB subfamily.

It carries out the reaction alpha-D-glucosamine 6-phosphate + H2O = beta-D-fructose 6-phosphate + NH4(+). The protein operates within amino-sugar metabolism; N-acetylneuraminate degradation; D-fructose 6-phosphate from N-acetylneuraminate: step 5/5. In terms of biological role, catalyzes the reversible isomerization-deamination of glucosamine 6-phosphate (GlcN6P) to form fructose 6-phosphate (Fru6P) and ammonium ion. In Lachnoclostridium phytofermentans (strain ATCC 700394 / DSM 18823 / ISDg) (Clostridium phytofermentans), this protein is Glucosamine-6-phosphate deaminase.